The primary structure comprises 208 residues: Proheparin-binding EGF-like growth factor (208 aa).

A signal peptide spans 1–23; the sequence is MKLLPSVMLKLFLAAVLSALVTG. Positions 24 to 62 are excised as a propeptide; the sequence is ESLERLRRGLAAATSNPDPPTGSTNQLLPTGGDRAQGVQ. Over 24-160 the chain is Extracellular; sequence ESLERLRRGL…ENPLYTYDHT (137 aa). 2 disordered regions span residues 35–57 and 80–104; these read AATSNPDPPTGSTNQLLPTGGDR and PQGLATPSKERNGKKKKKGKGLGKK. A compositionally biased stretch (polar residues) spans 36–51; the sequence is ATSNPDPPTGSTNQLL. An O-linked (GalNAc...) threonine glycan is attached at Thr85. Positions 91–102 are enriched in basic residues; that stretch reads NGKKKKKGKGLG. An EGF-like domain is found at 104–144; sequence KRDPCLRKYKDYCIHGECRYLQEFRTPSCKCLPGYHGHRCH. Intrachain disulfides connect Cys108-Cys121, Cys116-Cys132, and Cys134-Cys143. The propeptide at 149 to 208 is C-terminal; the sequence is PVENPLYTYDHTTVLAVVAVVLSSVCLLVIVGLLMFRYHRRGGYDLESEEKVKLGVASSH. A helical transmembrane segment spans residues 161–184; it reads TVLAVVAVVLSSVCLLVIVGLLMF. Residues 185–208 are Cytoplasmic-facing; that stretch reads RYHRRGGYDLESEEKVKLGVASSH.

Interacts with FBLN1. Interacts with EGFR and ERBB4. In terms of processing, O-glycosylated. In terms of tissue distribution, most abundant in kidney, skeletal muscle, lung, spleen, brain and heart.

It localises to the secreted. It is found in the extracellular space. The protein resides in the cell membrane. In terms of biological role, growth factor that mediates its effects via EGFR, ERBB2 and ERBB4. Required for normal cardiac valve formation and normal heart function. Promotes smooth muscle cell proliferation. May be involved in macrophage-mediated cellular proliferation. It is mitogenic for fibroblasts, but not endothelial cells. It is able to bind EGF receptor/EGFR with higher affinity than EGF itself and is a far more potent mitogen for smooth muscle cells than EGF. Also acts as a diphtheria toxin receptor. In Mus musculus (Mouse), this protein is Proheparin-binding EGF-like growth factor (Hbegf).